A 569-amino-acid polypeptide reads, in one-letter code: Urease subunit alpha (569 aa).

Residues 131 to 569 (GSIDTHIHFI…VPMAQKYFLL (439 aa)) enclose the Urease domain. Ni(2+)-binding residues include His-136, His-138, and Lys-219. Lys-219 is subject to N6-carboxylysine. His-221 provides a ligand contact to substrate. Ni(2+) is bound by residues His-248 and His-274. His-322 (proton donor) is an active-site residue. Asp-362 lines the Ni(2+) pocket.

The protein belongs to the metallo-dependent hydrolases superfamily. Urease alpha subunit family. In terms of assembly, heterotrimer of UreA (gamma), UreB (beta) and UreC (alpha) subunits. Two heterotrimers associate to form the active enzyme. In most bacteria it is thought that three heterotrimers form the active enzyme. Ni cation serves as cofactor. Carboxylation allows a single lysine to coordinate two nickel ions.

It localises to the cytoplasm. The catalysed reaction is urea + 2 H2O + H(+) = hydrogencarbonate + 2 NH4(+). Its pathway is nitrogen metabolism; urea degradation; CO(2) and NH(3) from urea (urease route): step 1/1. Inhibited by HgCl2 and acetohydroxyamic acid slightly by EDTA, but not by boric acid or L-methionine-DL-sulfoximine. The chain is Urease subunit alpha from Prochlorococcus marinus subsp. pastoris (strain PCC 9511).